The following is a 210-amino-acid chain: Hydrogenase expression/formation protein HupD (210 aa).

3 residues coordinate Ni(2+): Glu-22, Asp-68, and His-99.

Belongs to the peptidase A31 family.

In terms of biological role, not known. Could be involved in the processing of hydrogenase. This chain is Hydrogenase expression/formation protein HupD (hupD), found in Rhodobacter capsulatus (Rhodopseudomonas capsulata).